Reading from the N-terminus, the 294-residue chain is Probable WRKY transcription factor 70 (294 aa).

The tract at residues 72–94 (SQNASCDNDGKFEDSGDSRKRLG) is disordered. The segment covering 79–91 (NDGKFEDSGDSRK) has biased composition (basic and acidic residues). Positions 90–97 (RKRLGPVK) match the Nuclear localization signal motif. A DNA-binding region (WRKY) is located at residues 114–182 (IESTILEDAF…YIGNHTCNTN (69 aa)). The tract at residues 201 to 229 (SEDHKSPSLSTSMKEEDNPHRHHGSSTEN) is disordered.

This sequence belongs to the WRKY group III family. As to quaternary structure, interacts with WRKY30. Binds to BZR2/BES1 to cooperatively regulate the expression of target genes. Binds to unmodified (i.e. not sumoylated) NPR1. Post-translationally, phosphorylated and destabilized by ASK7/BIN2. Expressed in leaves and flowers.

It localises to the nucleus. Its function is as follows. Transcription factor involved in senescence, biotic and abiotic stress responses by modulating various phytohormones signaling pathways. Interacts specifically with the W box (5'-(T)TGAC[CT]-3'), a frequently occurring elicitor-responsive cis-acting element. Binds to the 5'-[CT]GACTTTT-3' motif in promoters of target genes to induce their expression. Binding to the W-box element of PR-1 promoter is mediated by not-sumoylated NPR1 in the absence of salicylic acid. Plays an important but not indispensable role in jasmonate and salicylic acid signaling. Positively regulates the salicylic acid (SA)-mediated signal pathway, but negatively the jasmonic acid (JA)-mediated signal pathway, thus determining the balance between these mutually antagonistic pathways. Together with WRKY46, WRKY53 and WRKY54, prevents defense response to the necrotrophic pathogens P.carotovorum and B.cinerea, but promotes defense responses (including SA-induced pathogenesis-related (PR) genes expression) against biotrophic/hemibiotrophic SA-monitored pathogens (e.g. P.syringae, E.carotovora subsp. carotovora SCC3193 and E.cichoracearum), probably by regulating negatively the JA/ET and positively the SA signaling pathways. Contributes to the suppression of jasmonic acid (MeJA)-induced expression of JA-responsive genes (e.g. PDF1.2). Promotes susceptibility to JA-monitored pathogens (e.g. A.brassicicola), probably by facilitating SA-controlled suppression of JA-mediated defense. Represses the biosynthesis of the phytoalexin camalexin and indol-3-ylmethyl glucosinolate (IGS). Represses both SA and JA/ethylene (ET) mediated defense marker genes expression. Negative regulator of SA biosynthesis. Negative regulator of EDS1-dependent defense against E.amylovora. Required for RPP4-mediated disease resistance and basal defense against H.parasitica, probably via late up-regulation (LURP) of resistance genes (e.g. CML10/CaBP22 and LURP1). Probably involved in defense responses toward insects (e.g. P.xylostella and B.brassicae). Together with WRKY54, negative regulator of developmental senescence, probably via the regulation of several senescence-associated markers genes. Together with WRKY46 and WRKY54, promotes brassinosteroid (BR)-regulated plant growth but prevent drought response by modulating gene expression. In collaboration with WRKY54, prevents stomatal closure and, consequently, osmotic stress tolerance. Regulates rhizobacterium B.cereus AR156-induced systemic resistance (ISR) to P.syringae pv. tomato DC3000. This is Probable WRKY transcription factor 70 from Arabidopsis thaliana (Mouse-ear cress).